We begin with the raw amino-acid sequence, 393 residues long: UDP-glucose 6-dehydrogenase (393 aa).

Val11, Asp31, Lys36, Thr85, Thr120, and Glu147 together coordinate NAD(+). Substrate contacts are provided by residues 143-147 (EFLRE), Lys199, Asn203, 244-248 (YNNPS), and Gly252. An NAD(+)-binding site is contributed by Tyr254. The active-site Nucleophile is Cys255. Lys258 contacts NAD(+). Lys309 lines the substrate pocket. NAD(+) is bound at residue Arg316.

Belongs to the UDP-glucose/GDP-mannose dehydrogenase family. As to quaternary structure, homodimer.

It catalyses the reaction UDP-alpha-D-glucose + 2 NAD(+) + H2O = UDP-alpha-D-glucuronate + 2 NADH + 3 H(+). Its pathway is nucleotide-sugar biosynthesis; UDP-alpha-D-glucuronate biosynthesis; UDP-alpha-D-glucuronate from UDP-alpha-D-glucose: step 1/1. It participates in capsule biogenesis; capsule polysaccharide biosynthesis. Catalyzes the formation of UDP-glucuronic acid which is required for capsular polysaccharide synthesis. Does not catalyze the formation of glucuronamide moiety of the capsular polysaccharide. The sequence is that of UDP-glucose 6-dehydrogenase from Campylobacter jejuni subsp. jejuni serotype O:2 (strain ATCC 700819 / NCTC 11168).